The sequence spans 706 residues: Protein MAM3 (706 aa).

The Vacuolar portion of the chain corresponds to 1–16 (MSFLPLRSRSRSGAPH). The chain crosses the membrane as a helical span at residues 17–37 (WVYIILYHIFTIPKIYSLPLL). Residues 38–65 (SGSHVLNSRDVADSGHSVGDEASVTTYY) lie on the Cytoplasmic side of the membrane. Residues 57–240 (DEASVTTYYI…MGVERLTKDE (184 aa)) enclose the CNNM transmembrane domain. A helical transmembrane segment spans residues 66–86 (IISIILVLLGGVFAGLTLGLM). Topologically, residues 87 to 120 (GQDEVYLKVISTSGSNSEKKLAKRVLDLISRGKH) are vacuolar. A helical membrane pass occupies residues 121–141 (WVLVTLLLSNVITNETLPIVL). The Cytoplasmic segment spans residues 142–145 (DRCL). A helical membrane pass occupies residues 146 to 166 (GGGWQAVVSSTILIVIFGEII). Topologically, residues 167–177 (PQSVCVKYGLQ) are vacuolar. A helical transmembrane segment spans residues 178 to 198 (VGAFFCPFVLVLMYLMYPVAY). Topologically, residues 199 to 706 (PIATLLDYML…ANGSSSTIKR (508 aa)) are cytoplasmic. CBS domains follow at residues 259–320 (MTPI…DCLP) and 321–386 (ISHF…IVDE). 3 disordered regions span residues 421 to 495 (SHKE…ASNP), 515 to 540 (ITTH…LSAE), and 557 to 597 (LHTQ…ENQN). Over residues 433–445 (ESSPLLSPSNSNH) the composition is skewed to low complexity. A phosphoserine mark is found at Ser439 and Ser447. Residues 472 to 495 (AVLSPTPQVTEHGTIIPSNLASNP) are compositionally biased toward polar residues. Phosphoserine is present on Ser527. The segment covering 566–575 (TQVTTSTKTT) has biased composition (low complexity). Positions 576–597 (RNSPDSISIPNSGANHGNENQN) are enriched in polar residues. A Phosphoserine modification is found at Ser603. Tyr604 is subject to Phosphotyrosine. The residue at position 607 (Thr607) is a Phosphothreonine. Ser614 is modified (phosphoserine). The disordered stretch occupies residues 626–706 (IGPAKDWDES…ANGSSSTIKR (81 aa)). The segment covering 630-639 (KDWDESKSEY) has biased composition (basic and acidic residues). Low complexity predominate over residues 658-680 (SSSNASLFSSIKNKFKNENANNN). A compositionally biased stretch (polar residues) spans 681–706 (DRSNFTDSLSRTSNYDANGSSSTIKR).

This sequence belongs to the ACDP family.

The protein resides in the vacuole membrane. Functionally, involved in metal homeostasis and more specially in manganese sensitivity. This chain is Protein MAM3 (MAM3), found in Saccharomyces cerevisiae (strain ATCC 204508 / S288c) (Baker's yeast).